The following is a 625-amino-acid chain: Very-long-chain aldehyde decarbonylase CER1 (625 aa).

Transmembrane regions (helical) follow at residues 45-65, 126-146, 177-197, 200-220, and 329-349; these read LGYF…QVWI, GVLM…YWLH, PFAE…TTLL, TASI…NNMG, and LLWP…RLFV. Residues 138–272 form the Fatty acid hydroxylase domain; sequence VEFLYYWLHK…MPLYDYIYGT (135 aa).

It belongs to the sterol desaturase family. As to quaternary structure, homodimer. Interacts with CER3, CYTB5-B, CYTB5-C, CYTB5-D and CYTB5-E. In terms of tissue distribution, expressed in seedlings, stems, leaves, flowers, fruits and siliques. Not detected in roots, pollen and seeds. Expressed in trichomes, cotyledons, shoot apical meristem and leaf primordia. Preferentially associated with young leaves rather than mature leaves. Expressed in the epidermis of the stem and caulines leaves, in the carpels and the sepals.

The protein resides in the endoplasmic reticulum membrane. It carries out the reaction a long-chain fatty aldehyde + 2 NADPH + O2 + H(+) = a long-chain alkane + formate + 2 NADP(+) + H2O. Its function is as follows. Aldehyde decarbonylase involved in the conversion of aldehydes to alkanes. Core component of a very-long-chain alkane synthesis complex. Involved in epicuticular wax biosynthesis and pollen fertility. The polypeptide is Very-long-chain aldehyde decarbonylase CER1 (CER1) (Arabidopsis thaliana (Mouse-ear cress)).